The chain runs to 889 residues: Alanine--tRNA ligase (889 aa).

The Zn(2+) site is built by H574, H578, C676, and H680.

The protein belongs to the class-II aminoacyl-tRNA synthetase family. Zn(2+) is required as a cofactor.

The protein localises to the cytoplasm. The enzyme catalyses tRNA(Ala) + L-alanine + ATP = L-alanyl-tRNA(Ala) + AMP + diphosphate. Catalyzes the attachment of alanine to tRNA(Ala) in a two-step reaction: alanine is first activated by ATP to form Ala-AMP and then transferred to the acceptor end of tRNA(Ala). Also edits incorrectly charged Ser-tRNA(Ala) and Gly-tRNA(Ala) via its editing domain. The protein is Alanine--tRNA ligase of Thermobifida fusca (strain YX).